We begin with the raw amino-acid sequence, 202 residues long: Guanylate kinase (202 aa).

The 183-residue stretch at 18 to 200 (LKPVVVFGPS…AYKQLEAICL (183 aa)) folds into the Guanylate kinase-like domain. ATP is bound at residue 25–32 (GPSGVGKS).

Belongs to the guanylate kinase family.

The catalysed reaction is GMP + ATP = GDP + ADP. Functionally, essential for recycling GMP and indirectly, cGMP. In Schizosaccharomyces pombe (strain 972 / ATCC 24843) (Fission yeast), this protein is Guanylate kinase.